Consider the following 115-residue polypeptide: NADH-ubiquinone oxidoreductase chain 3 (115 aa).

The next 3 helical transmembrane spans lie at 4 to 24 (LTALSVNIALSTCLIAIAFWL), 55 to 75 (FFLVAITFLLFDLEIALLLPL), and 87 to 107 (MMLTAFILVSVLALGLAYEWM).

It belongs to the complex I subunit 3 family. As to quaternary structure, core subunit of respiratory chain NADH dehydrogenase (Complex I) which is composed of 45 different subunits. Interacts with TMEM186. Interacts with TMEM242.

Its subcellular location is the mitochondrion inner membrane. The catalysed reaction is a ubiquinone + NADH + 5 H(+)(in) = a ubiquinol + NAD(+) + 4 H(+)(out). In terms of biological role, core subunit of the mitochondrial membrane respiratory chain NADH dehydrogenase (Complex I) which catalyzes electron transfer from NADH through the respiratory chain, using ubiquinone as an electron acceptor. Essential for the catalytic activity of complex I. The chain is NADH-ubiquinone oxidoreductase chain 3 from Peromyscus boylii (Brush deermouse).